A 201-amino-acid chain; its full sequence is Translation initiation factor IF-3 (201 aa).

The tract at residues T170–E201 is disordered. Over residues P182–S195 the composition is skewed to polar residues.

Belongs to the IF-3 family. Monomer.

Its subcellular location is the cytoplasm. Its function is as follows. IF-3 binds to the 30S ribosomal subunit and shifts the equilibrium between 70S ribosomes and their 50S and 30S subunits in favor of the free subunits, thus enhancing the availability of 30S subunits on which protein synthesis initiation begins. The polypeptide is Translation initiation factor IF-3 (Porphyromonas gingivalis (strain ATCC BAA-308 / W83)).